The sequence spans 106 residues: UPF0060 membrane protein AZC_0909 (106 aa).

4 helical membrane-spanning segments follow: residues 4–24 (PLFA…WHVV), 27–47 (GGSP…AALL), 58–78 (AFAA…WAAE), and 84–104 (RFDA…LFAP).

The protein belongs to the UPF0060 family.

It is found in the cell inner membrane. This Azorhizobium caulinodans (strain ATCC 43989 / DSM 5975 / JCM 20966 / LMG 6465 / NBRC 14845 / NCIMB 13405 / ORS 571) protein is UPF0060 membrane protein AZC_0909.